Reading from the N-terminus, the 433-residue chain is Serine hydroxymethyltransferase (433 aa).

Residues leucine 132 and 136–138 (GHL) each bind (6S)-5,6,7,8-tetrahydrofolate. At lysine 241 the chain carries N6-(pyridoxal phosphate)lysine.

This sequence belongs to the SHMT family. As to quaternary structure, homodimer. It depends on pyridoxal 5'-phosphate as a cofactor.

The protein localises to the cytoplasm. It carries out the reaction (6R)-5,10-methylene-5,6,7,8-tetrahydrofolate + glycine + H2O = (6S)-5,6,7,8-tetrahydrofolate + L-serine. Its pathway is one-carbon metabolism; tetrahydrofolate interconversion. It participates in amino-acid biosynthesis; glycine biosynthesis; glycine from L-serine: step 1/1. Its function is as follows. Catalyzes the reversible interconversion of serine and glycine with tetrahydrofolate (THF) serving as the one-carbon carrier. This reaction serves as the major source of one-carbon groups required for the biosynthesis of purines, thymidylate, methionine, and other important biomolecules. Also exhibits THF-independent aldolase activity toward beta-hydroxyamino acids, producing glycine and aldehydes, via a retro-aldol mechanism. The protein is Serine hydroxymethyltransferase of Rhodopseudomonas palustris (strain BisA53).